A 265-amino-acid polypeptide reads, in one-letter code: Mlc titration factor A (265 aa).

H111, H148, H152, and E211 together coordinate Zn(2+).

Belongs to the MtfA family. As to quaternary structure, interacts with Mlc. Zn(2+) serves as cofactor.

The protein localises to the cytoplasm. In terms of biological role, involved in the modulation of the activity of the glucose-phosphotransferase system (glucose-PTS). Interacts with the transcriptional repressor Mlc, preventing its interaction with DNA and leading to the modulation of expression of genes regulated by Mlc, including ptsG, which encodes the PTS system glucose-specific EIICB component. Its function is as follows. Shows zinc-dependent metallopeptidase activity. In Salmonella paratyphi A (strain AKU_12601), this protein is Mlc titration factor A.